A 412-amino-acid chain; its full sequence is MKENFNISKLKNGLTVLTYNMPYVDSVAINLITKVGSRYENSEEEGISHFLEHMAFKGTTTRTAKQIAEEFDEIGGHFNAYTGHEKTIYYARVLSENCDKALNILADIIQNSIFAEEEIAKEYQVILQEIAHSQDNPDDLIYEKFYSSVYKDQPLGKPILGASKTLSSFTKEHFLSFIDKHYNAGNLYLSVAGNVDHDKIVSSAERLFSSLKQGEKSNFLPAKYIGGNSFINKDLEQTTLILGFEGTPYINLERLYRTQLLAIIFGGGMSSRLFQHIREKLGLAYAVGSYNSTYSDSGVFTIYASTAHDKLELLYKELKTEITKMTEKVNEEEMIRAKTQLRSNLLMAQEKVAYKSEEIGKNYAAFGKYIPPEEIMEIITNIKADDIINTANKIFSSITTSAIIGPNDLRGF.

H49 provides a ligand contact to Zn(2+). The active-site Proton acceptor is the E52. 2 residues coordinate Zn(2+): H53 and E129.

This sequence belongs to the peptidase M16 family. It depends on Zn(2+) as a cofactor.

This is an uncharacterized protein from Rickettsia felis (strain ATCC VR-1525 / URRWXCal2) (Rickettsia azadi).